We begin with the raw amino-acid sequence, 104 residues long: Glutaredoxin-C15 (104 aa).

The Glutaredoxin domain maps to 1 to 103 (MERVAKLSTE…PMLKAAGAIW (103 aa)). A disulfide bond links cysteine 21 and cysteine 24.

Belongs to the glutaredoxin family. CC-type subfamily.

The protein resides in the cytoplasm. In terms of biological role, has a glutathione-disulfide oxidoreductase activity in the presence of NADPH and glutathione reductase. Reduces low molecular weight disulfides and proteins. This Oryza sativa subsp. japonica (Rice) protein is Glutaredoxin-C15 (GRXC15).